The following is a 336-amino-acid chain: S-adenosylmethionine:tRNA ribosyltransferase-isomerase (336 aa).

The protein belongs to the QueA family. In terms of assembly, monomer.

It is found in the cytoplasm. The enzyme catalyses 7-aminomethyl-7-carbaguanosine(34) in tRNA + S-adenosyl-L-methionine = epoxyqueuosine(34) in tRNA + adenine + L-methionine + 2 H(+). It participates in tRNA modification; tRNA-queuosine biosynthesis. In terms of biological role, transfers and isomerizes the ribose moiety from AdoMet to the 7-aminomethyl group of 7-deazaguanine (preQ1-tRNA) to give epoxyqueuosine (oQ-tRNA). The protein is S-adenosylmethionine:tRNA ribosyltransferase-isomerase of Sulfurihydrogenibium sp. (strain YO3AOP1).